Here is a 22-residue protein sequence, read N- to C-terminus: Chymotrypsin inhibitor (22 aa).

The disordered stretch occupies residues 1–22; it reads FDESFGFQGPSTYEKTPLGEPA.

In terms of tissue distribution, hemolymph.

The protein resides in the secreted. It is found in the extracellular space. In terms of biological role, inhibits chymotrypsin stoichiometrically. Also inhibits porcine pancreatic elastase and trypsin. In Mythimna unipuncta (Armyworm moth), this protein is Chymotrypsin inhibitor.